A 476-amino-acid polypeptide reads, in one-letter code: Bifunctional protein HldE (476 aa).

Positions 1-319 (MKVSLPAFEK…EALALHHGES (319 aa)) are ribokinase. 195 to 198 (NMSE) lines the ATP pocket. Residue Asp-264 is part of the active site. Residues 345–476 (MTNGCFDILH…AIIQNIMANQ (132 aa)) form a cytidylyltransferase region.

In the N-terminal section; belongs to the carbohydrate kinase PfkB family. This sequence in the C-terminal section; belongs to the cytidylyltransferase family. As to quaternary structure, homodimer.

It carries out the reaction D-glycero-beta-D-manno-heptose 7-phosphate + ATP = D-glycero-beta-D-manno-heptose 1,7-bisphosphate + ADP + H(+). It catalyses the reaction D-glycero-beta-D-manno-heptose 1-phosphate + ATP + H(+) = ADP-D-glycero-beta-D-manno-heptose + diphosphate. Its pathway is nucleotide-sugar biosynthesis; ADP-L-glycero-beta-D-manno-heptose biosynthesis; ADP-L-glycero-beta-D-manno-heptose from D-glycero-beta-D-manno-heptose 7-phosphate: step 1/4. The protein operates within nucleotide-sugar biosynthesis; ADP-L-glycero-beta-D-manno-heptose biosynthesis; ADP-L-glycero-beta-D-manno-heptose from D-glycero-beta-D-manno-heptose 7-phosphate: step 3/4. Its function is as follows. Catalyzes the phosphorylation of D-glycero-D-manno-heptose 7-phosphate at the C-1 position to selectively form D-glycero-beta-D-manno-heptose-1,7-bisphosphate. Catalyzes the ADP transfer from ATP to D-glycero-beta-D-manno-heptose 1-phosphate, yielding ADP-D-glycero-beta-D-manno-heptose. The chain is Bifunctional protein HldE from Shewanella baltica (strain OS185).